The following is a 309-amino-acid chain: Oxygen-dependent coproporphyrinogen-III oxidase (309 aa).

Residue Ser94 participates in substrate binding. A divalent metal cation contacts are provided by His98 and His108. Catalysis depends on His108, which acts as the Proton donor. Position 110–112 (110–112 (NVR)) interacts with substrate. His147 and His177 together coordinate a divalent metal cation. The tract at residues 242-277 (YVEFNLVWDRGTLFGLQTGGRTESILMSLPPLVRWE) is important for dimerization. 260 to 262 (GGR) is a binding site for substrate.

Belongs to the aerobic coproporphyrinogen-III oxidase family. Homodimer. A divalent metal cation serves as cofactor.

It is found in the cytoplasm. It catalyses the reaction coproporphyrinogen III + O2 + 2 H(+) = protoporphyrinogen IX + 2 CO2 + 2 H2O. Its pathway is porphyrin-containing compound metabolism; protoporphyrin-IX biosynthesis; protoporphyrinogen-IX from coproporphyrinogen-III (O2 route): step 1/1. In terms of biological role, involved in the heme biosynthesis. Catalyzes the aerobic oxidative decarboxylation of propionate groups of rings A and B of coproporphyrinogen-III to yield the vinyl groups in protoporphyrinogen-IX. The chain is Oxygen-dependent coproporphyrinogen-III oxidase from Yersinia pestis bv. Antiqua (strain Antiqua).